The primary structure comprises 1045 residues: Tyrosine-protein kinase-like otk (1045 aa).

Positions 1–25 (MPIVMDMNMLLMLSLAFTVMAPASA) are cleaved as a signal peptide. 5 consecutive Ig-like C2-type domains span residues 26–116 (SSSR…AKLS), 115–200 (LSVI…RVMS), 260–373 (PEGL…APVN), 376–469 (PGAL…VAIN), and 474–564 (PRFS…VRLL). Residues 26 to 587 (SSSRFTQPPQ…AGDGFLVTRA (562 aa)) lie on the Extracellular side of the membrane. 4 cysteine pairs are disulfide-bonded: cysteine 49–cysteine 97, cysteine 139–cysteine 189, cysteine 285–cysteine 362, and cysteine 406–cysteine 453. N-linked (GlcNAc...) asparagine glycosylation is found at asparagine 344, asparagine 424, asparagine 435, asparagine 442, asparagine 450, asparagine 463, asparagine 518, and asparagine 530. Cysteine 496 and cysteine 548 are joined by a disulfide. Residues 588 to 608 (VLITMTVALAYIVLVVGLMLW) form a helical membrane-spanning segment. Topologically, residues 609–1045 (CRYRRQARKA…LSKAMQAAEK (437 aa)) are cytoplasmic. Residues 628-676 (AGGDQAESGKNTEQEPCLSKQRNGHGKSRTAANGDAQKSDDTACSQQSK) form a disordered region. Phosphoserine is present on serine 681. The region spanning 695 to 1040 (LSELIQIGRG…QLGAALSKAM (346 aa)) is the Protein kinase; inactive domain. Residues 722-790 (ASPSDKDADT…QPQEQAQSES (69 aa)) are disordered. Residues 725 to 736 (SDKDADTEKQHS) show a composition bias toward basic and acidic residues. Positions 743–752 (GASGASGCGS) are enriched in gly residues. Over residues 771 to 782 (DDIEEIKEEEQP) the composition is skewed to acidic residues.

This sequence belongs to the protein kinase superfamily. Tyr protein kinase family. Insulin receptor subfamily. In terms of assembly, interacts with plexA; component of a receptor complex that mediates the repulsive signaling in response to Semaphorin ligands.

The protein localises to the cell membrane. Its function is as follows. Acts as a calcium-dependent, homophilic cell adhesion molecule that regulates neural recognition during the development of the nervous system. Component of the repulsive Plexin signaling response to regulate motor axon guidance at the embryonic stage. Also component of a receptor complex that is required in the adult visual system to innervate the lamina layer; specific targeting of R1-R6 axons. This Drosophila mojavensis (Fruit fly) protein is Tyrosine-protein kinase-like otk.